The following is a 342-amino-acid chain: Ribosomal RNA small subunit methyltransferase C (342 aa).

The protein belongs to the methyltransferase superfamily. RsmC family. As to quaternary structure, monomer.

It is found in the cytoplasm. It carries out the reaction guanosine(1207) in 16S rRNA + S-adenosyl-L-methionine = N(2)-methylguanosine(1207) in 16S rRNA + S-adenosyl-L-homocysteine + H(+). Specifically methylates the guanine in position 1207 of 16S rRNA in the 30S particle. The sequence is that of Ribosomal RNA small subunit methyltransferase C from Salmonella paratyphi A (strain ATCC 9150 / SARB42).